Reading from the N-terminus, the 229-residue chain is Orotidine 5'-phosphate decarboxylase (229 aa).

Residues D11, K33, 61–70 (DMKLFDISAT), T116, R179, Q188, G208, and R209 each bind substrate. The active-site Proton donor is the K63.

Belongs to the OMP decarboxylase family. Type 1 subfamily. Homodimer.

The enzyme catalyses orotidine 5'-phosphate + H(+) = UMP + CO2. The protein operates within pyrimidine metabolism; UMP biosynthesis via de novo pathway; UMP from orotate: step 2/2. Catalyzes the decarboxylation of orotidine 5'-monophosphate (OMP) to uridine 5'-monophosphate (UMP). This is Orotidine 5'-phosphate decarboxylase from Jannaschia sp. (strain CCS1).